Here is a 234-residue protein sequence, read N- to C-terminus: Demethylmenaquinone methyltransferase (234 aa).

Residues threonine 58, aspartate 79, and 106-107 each bind S-adenosyl-L-methionine; that span reads NA.

This sequence belongs to the class I-like SAM-binding methyltransferase superfamily. MenG/UbiE family.

It carries out the reaction a 2-demethylmenaquinol + S-adenosyl-L-methionine = a menaquinol + S-adenosyl-L-homocysteine + H(+). It participates in quinol/quinone metabolism; menaquinone biosynthesis; menaquinol from 1,4-dihydroxy-2-naphthoate: step 2/2. Functionally, methyltransferase required for the conversion of demethylmenaquinol (DMKH2) to menaquinol (MKH2). The polypeptide is Demethylmenaquinone methyltransferase (Geobacillus sp. (strain WCH70)).